Reading from the N-terminus, the 472-residue chain is NADH-quinone oxidoreductase subunit N 2 (472 aa).

13 helical membrane passes run 3–23 (WMSFAPELITLTSALWFLLLS), 34–54 (HVAALVLSALGLAACLASVGA), 67–87 (LFSQVFKVLLAAGLFLIVTLC), 106–126 (FVCTLAMMLLVGANHFLVVFI), 156–176 (FLVGIFASGVMIFGLALLYGA), 198–218 (VVIGLLLTLSGFFFKLAVFPF), 233–253 (VSAYIATASKVAAIGVLVRVI), 263–283 (LVHVLAVLSVVSMTVGNLAAI), 291–311 (LLAYSTVAHAGYVLIGVLSMN), 317–337 (AAVFYAFALLVMKFTAFLVLV), 360–380 (ILALALMVSLFSLAGIPPTVG), 398–418 (TLVLIAMINVVISLYYYLLVI), and 441–461 (LLSGVLVIAMVAAGFFPNQII).

This sequence belongs to the complex I subunit 2 family. In terms of assembly, NDH-1 is composed of 14 different subunits. Subunits NuoA, H, J, K, L, M, N constitute the membrane sector of the complex.

It localises to the cell inner membrane. The catalysed reaction is a quinone + NADH + 5 H(+)(in) = a quinol + NAD(+) + 4 H(+)(out). Functionally, NDH-1 shuttles electrons from NADH, via FMN and iron-sulfur (Fe-S) centers, to quinones in the respiratory chain. The immediate electron acceptor for the enzyme in this species is believed to be ubiquinone. Couples the redox reaction to proton translocation (for every two electrons transferred, four hydrogen ions are translocated across the cytoplasmic membrane), and thus conserves the redox energy in a proton gradient. The polypeptide is NADH-quinone oxidoreductase subunit N 2 (Syntrophobacter fumaroxidans (strain DSM 10017 / MPOB)).